The primary structure comprises 655 residues: p-hydroxybenzoic acid efflux pump subunit AaeB (655 aa).

Residues methionine 1–arginine 12 are Periplasmic-facing. A helical transmembrane segment spans residues phenylalanine 13–leucine 33. Residues glutamate 34–arginine 37 are Cytoplasmic-facing. A helical transmembrane segment spans residues tryptophan 38–proline 58. The Periplasmic portion of the chain corresponds to tyrosine 59–methionine 68. The helical transmembrane segment at leucine 69–isoleucine 89 threads the bilayer. Topologically, residues arginine 90–proline 92 are cytoplasmic. A helical membrane pass occupies residues leucine 93–valine 113. Over arginine 114–alanine 120 the chain is Periplasmic. A helical membrane pass occupies residues tryptophan 121–leucine 141. Residues threonine 142–serine 151 are Cytoplasmic-facing. Residues glutamate 152–isoleucine 172 form a helical membrane-spanning segment. Over lysine 173–threonine 369 the chain is Periplasmic. A helical transmembrane segment spans residues leucine 370–valine 390. At threonine 391–aspartate 406 the chain is on the cytoplasmic side. The helical transmembrane segment at phenylalanine 407–proline 427 threads the bilayer. Topologically, residues asparagine 428–glutamine 430 are periplasmic. The helical transmembrane segment at glutamine 431 to valine 451 threads the bilayer. Residues glutamine 452–methionine 459 lie on the Cytoplasmic side of the membrane. Residues glycine 460–isoleucine 480 form a helical membrane-spanning segment. Residue glutamine 481 is a topological domain, periplasmic. Residues phenylalanine 482 to leucine 502 form a helical membrane-spanning segment. Residues valine 503 to serine 655 lie on the Cytoplasmic side of the membrane.

It belongs to the aromatic acid exporter ArAE (TC 2.A.85) family.

The protein resides in the cell inner membrane. Functionally, forms an efflux pump with AaeA. Could function as a metabolic relief valve, allowing to eliminate certain compounds when they accumulate to high levels in the cell. The polypeptide is p-hydroxybenzoic acid efflux pump subunit AaeB (Salmonella typhi).